The sequence spans 527 residues: Amino acid transporter heavy chain SLC3A2 (527 aa).

Residues 1 to 31 are disordered; sequence MSQDTEVDMKDVELNELEPEKQPMNAADGAA. Residues 1–75 are Cytoplasmic-facing; it reads MSQDTEVDMK…AGSPGWVRTR (75 aa). Ser-2 is subject to Phosphoserine. Thr-5 bears the Phosphothreonine mark. The span at 7–21 shows a compositional bias: basic and acidic residues; the sequence is VDMKDVELNELEPEK. Lys-42 participates in a covalent cross-link: Glycyl lysine isopeptide (Lys-Gly) (interchain with G-Cter in ubiquitin). The residue at position 58 (Ser-58) is a Phosphoserine. A Glycyl lysine isopeptide (Lys-Gly) (interchain with G-Cter in SUMO2) cross-link involves residue Lys-59. A helical; Signal-anchor for type II membrane protein transmembrane segment spans residues 76–98; sequence WALLLLFWLGWLGMLAGAVVIIV. Topologically, residues 99-527 are extracellular; sequence RAPRCRELPV…GLLLQFPFVA (429 aa). 4 N-linked (GlcNAc...) asparagine glycosylation sites follow: Asn-166, Asn-249, Asn-259, and Asn-263. Ser-300 carries the phosphoserine modification. N-linked (GlcNAc...) asparagine glycosylation is found at Asn-318, Asn-386, and Asn-400. A Phosphoserine modification is found at Ser-421. N-linked (GlcNAc...) asparagine glycosylation is present at Asn-510.

This sequence belongs to the SLC3A transporter family. As to quaternary structure, disulfide-linked heterodimer with a non-glycosylated light chain (SLC7A5, SLC7A6, SLC7A7, SLC7A8, SLC7A10 or SLC7A11). Interacts with TLCD3A/CT120 and ICAM1. Constitutively and specifically associates with beta-1 integrins (alpha-2/beta-1, alpha-3/beta-1, alpha-5/beta-1 and alpha-6/beta-1), but minimally with alpha-4/beta-1. Interacts with LAPTM4B; recruits SLC3A2 and SLC7A5 to lysosomes to promote leucine uptake into these organelles and is required for mTORC1 activation. In terms of processing, phosphorylation on Ser-300 and on Ser-421 by ecto-protein kinases favors heterotypic cell-cell interactions. Post-translationally, N-glycosylated; N-glycosylation is crucial for trafficking and stability of SLC3A2 to the plasma membrane. In terms of tissue distribution, in brain expressed on capillary endothelia in cerebral cortex (at protein level). Highest expression in kidney, jejunum, ileum, colon, placenta, testis and spleen. Lower levels found in liver, lung and brain with weakest expression in heart. Expressed in retina, inner blood-retinal barrier of retina, retinal vascular endothelial cells. Also expressed in C6 glioma cells and in the retinal capillary endothelial cell line TR-iBRB2.

It localises to the apical cell membrane. The protein localises to the cell membrane. Its subcellular location is the cell junction. The protein resides in the lysosome membrane. It is found in the melanosome. It localises to the basolateral cell membrane. Its function is as follows. Acts as a chaperone that facilitates biogenesis and trafficking of functional transporters heterodimers to the plasma membrane. Forms heterodimer with SLC7 family transporters (SLC7A5, SLC7A6, SLC7A7, SLC7A8, SLC7A10 and SLC7A11), a group of amino-acid antiporters. Heterodimers function as amino acids exchangers, the specificity of the substrate depending on the SLC7A subunit. Heterodimers formed by SLC3A2/SLC7A6 or SLC3A2/SLC7A7 mediate the uptake of dibasic amino acids. Heterodimer SLC3A2/SLC7A11 functions as an antiporter by mediating the exchange of extracellular anionic L-cystine and intracellular L-glutamate across the cellular plasma membrane. SLC3A2/SLC7A10 translocates small neutral L- and D-amino acids across the plasma membrane. SLC3A2/SLC75 or SLC3A2/SLC7A8 translocates neutral amino acids with broad specificity, thyroid hormones and L-DOPA. SLC3A2 is essential for plasma membrane localization, stability, and the transport activity of SLC7A5 and SLC7A8. When associated with LAPTM4B, the heterodimer SLC7A5 is recruited to lysosomes to promote leucine uptake into these organelles, and thereby mediates mTORC1 activation. Modulates integrin-related signaling and is essential for integrin-dependent cell spreading, migration and tumor progression. This is Amino acid transporter heavy chain SLC3A2 from Rattus norvegicus (Rat).